A 1267-amino-acid chain; its full sequence is Probable ATP-dependent RNA helicase DHR1 (1267 aa).

3 disordered regions span residues M1–T67, Y168–K233, and E255–D313. Composition is skewed to basic and acidic residues over residues R7 to R25 and T32 to N43. Residues E175–E192 are compositionally biased toward acidic residues. S181 bears the Phosphoserine mark. Positions T202–P217 are enriched in basic and acidic residues. Over residues D264–E284 the composition is skewed to acidic residues. One can recognise a Helicase ATP-binding domain in the interval M401–V580. Position 414–421 (G414–T421) interacts with ATP. The DEAH box motif lies at D516 to H519. In terms of domain architecture, Helicase C-terminal spans D675–A858. Disordered stretches follow at residues R693 to T720 and P955 to D976. Residues E695–L719 are compositionally biased toward acidic residues.

The protein belongs to the DEAD box helicase family. DEAH subfamily. As to quaternary structure, interacts with snoRNA U3. Component of the ribosomal small subunit (SSU) processome composed of at least 40 protein subunits and snoRNA U3.

Its subcellular location is the nucleus. It is found in the nucleolus. It catalyses the reaction ATP + H2O = ADP + phosphate + H(+). Functionally, probable ATP-binding RNA helicase. Required for 18S rRNA synthesis. May play a role in restructuring of the pre-rRNA. The polypeptide is Probable ATP-dependent RNA helicase DHR1 (ECM16) (Saccharomyces cerevisiae (strain ATCC 204508 / S288c) (Baker's yeast)).